The primary structure comprises 248 residues: 14-3-3 protein (248 aa).

Coiled coils occupy residues 13–33 and 91–111; these read MAQL…MRKI and RQKI…LLQE. 135–136 is a binding site for O-phospho-L-serine; sequence RY. At Thr214 the chain carries Phosphothreonine. The short motif at 237–248 is the Putative polyglycylation target motif (T/G)X0-1(D/E)X1-3-G(D/E)X1-2(gE)2-4, where X is polar or negatively charged amino acid, and gE is polyglycylated glutamine element; it reads TDSAGDDNAEEK. Glu246 is subject to 5-glutamyl polyglycine.

Belongs to the 14-3-3 family. In terms of assembly, homodimer. Homodimerizes via N-terminal domains. Oligomerizes forming homotrimers, homotetramers and protein filaments. Oligomerization is hindered by polyglycylation in vivo. Interacts with a large number of both cytosolic and membrane proteins in trophozoites and encysting parasites. Interacts with a serine/threonine protein kinase GL50803_112076 (gCDC7). Component of a multiprotein complex containing gCDC7 and GL50803_94117 (gDBF4), a regulatory subunit of gCDC7, during both the trophozoite and encysting stages of the parasite. Interacts with fructose-bisphosphate aldolase GL50803_11043 (gFBA), pyruvate kinase GL50803_17143 (gPyk), acetyl-CoA synthetase GL50803_13608 (gACS), protein kinase GL50803_22165 (gSTE), DEAD box RNA helicase GL50803_34684 (gVASA) and Golgi/cell cycle associated protein GL50803_17472 (gGCCA). Interacts with actin. Interacts with both monomeric phosphorylated and unphosphorylated actin. The interaction is enhanced by phosphorylation of actin and inhibited by Rho GTPase Rac. In terms of processing, phosphorylated constitutively throughout the life cycle. Phosphorylation is very high in trophozoites and encysting cells of 12 hours. Phosphorylated during excystation. Phosphorylation promotes its binding to various target proteins and is critical for encystation process. Phosphorylation modification is not influenced by polyglycylation modification. Polyglycylated on a glutamate residue, resulting in polyglycine chain on the gamma-carboxyl group. Polyglycylated by the tubulin--tyrosine ligase-like protein GL50803_8456 (gTTLL3). The polyglycine chain is shortened by metallopeptidases of the M20 family, namely dipeptidases GL50803_15832 (gDIP1) and GL50803_8407 (gDIP2). The length of the polyglycine chain is developmental stage-dependent. In trophozoites, glycine residues range from 10 to 31, with the greatest occurrence of 21 residues. In 12 hour encystation stage, glycine residues range from 6 to 22, with the greatest occurrence of 10 residues. The differential rate of polyglycylation/deglycylation during the encystation process regulates the intracellular localization of this protein. Relocalizes partially from the cytoplasm inside the nuclei following the shortening of the polyglycine chain in encysting cells. Polyglycylation modification is not influenced by phosphorylation modification. Polyglycylation prevents oligomerization in vivo.

The protein resides in the cytoplasm. The protein localises to the cytoskeleton. It is found in the nucleus. Its subcellular location is the cell projection. It localises to the cilium. The protein resides in the flagellum. The protein localises to the spindle. It is found in the nucleus envelope. Its subcellular location is the endoplasmic reticulum. In terms of biological role, adapter protein implicated in the regulation of a large spectrum of both general and specialized signaling pathways. Binds to a large number of partners, usually by recognition of a phosphoserine or phosphothreonine motif. Binding generally results in the modulation of the activity of the binding partner. Binds with varying affinity to various synthetic phosphopeptides having a consensus binding motif RSX(pS/pT)XP, called mode-1, where X is any residue and pS/pT is a phosphorylated serine/threonine, and to synthetic phosphopeptides having a consensus binding motif Xp(S/T)X1-2-COOH, called mode-3, in which the phosphorylated residue occupies the penultimate C-terminal position in the target protein, but does not bind to their unphosphorylated counterparts. Binds to synthetic human RAF1 phosphopeptides, but not to their unphosphorylated forms. Binds to difopein, a polypeptide containing a phosphorylation-independent binding motif. Involved in encystation. Involved in cell proliferation. Required for actin and tubulin cytoskeletal organization. Regulates actin filament formation and nuclear size. The polypeptide is 14-3-3 protein (Giardia intestinalis (strain ATCC 50803 / WB clone C6) (Giardia lamblia)).